The sequence spans 930 residues: Protein translocase subunit SecA (930 aa).

Residues Gln87, 105–109, and Asp515 contribute to the ATP site; that span reads GEGKT. Zn(2+) is bound by residues Cys914, Cys916, Cys925, and His926.

This sequence belongs to the SecA family. As to quaternary structure, monomer and homodimer. Part of the essential Sec protein translocation apparatus which comprises SecA, SecYEG and auxiliary proteins SecDF-YajC and YidC. Zn(2+) is required as a cofactor.

It is found in the cell inner membrane. The protein localises to the cytoplasm. The catalysed reaction is ATP + H2O + cellular proteinSide 1 = ADP + phosphate + cellular proteinSide 2.. In terms of biological role, part of the Sec protein translocase complex. Interacts with the SecYEG preprotein conducting channel. Has a central role in coupling the hydrolysis of ATP to the transfer of proteins into and across the cell membrane, serving both as a receptor for the preprotein-SecB complex and as an ATP-driven molecular motor driving the stepwise translocation of polypeptide chains across the membrane. The chain is Protein translocase subunit SecA from Burkholderia vietnamiensis (strain G4 / LMG 22486) (Burkholderia cepacia (strain R1808)).